The following is a 393-amino-acid chain: O-phospho-L-seryl-tRNA:Cys-tRNA synthase 1 (393 aa).

Residues 85-86, Asn-190, and 213-215 contribute to the pyridoxal 5'-phosphate site; these read AR and SGH. Lys-216 bears the N6-(pyridoxal phosphate)lysine mark.

Belongs to the SepCysS family. Homodimer. Interacts with SepRS. It depends on pyridoxal 5'-phosphate as a cofactor.

It carries out the reaction O-phospho-L-seryl-tRNA(Cys) + hydrogen sulfide + H(+) = L-cysteinyl-tRNA(Cys) + phosphate. In terms of biological role, converts O-phospho-L-seryl-tRNA(Cys) (Sep-tRNA(Cys)) to L-cysteinyl-tRNA(Cys) (Cys-tRNA(Cys)). This is O-phospho-L-seryl-tRNA:Cys-tRNA synthase 1 from Methanospirillum hungatei JF-1 (strain ATCC 27890 / DSM 864 / NBRC 100397 / JF-1).